Here is a 377-residue protein sequence, read N- to C-terminus: Pseudouridylate synthase RPUSD4, mitochondrial (377 aa).

The transit peptide at 1-15 directs the protein to the mitochondrion; it reads MAAPRWSASGPWIRG. The stretch at 36–62 forms a coiled coil; that stretch reads AASTAINAQRLAEKLRAQKREQDTKKE. Aspartate 153 is a catalytic residue.

It belongs to the pseudouridine synthase RluA family. In terms of assembly, interacts with 16S mt-rRNA, mt-tRNA(Phe) and mt-tRNA(Met). Forms a regulatory protein-RNA complex, consisting of RCC1L, NGRN, RPUSD3, RPUSD4, TRUB2, FASTKD2 and 16S mt-rRNA.

The protein localises to the mitochondrion matrix. The protein resides in the nucleus. It localises to the cytoplasm. It catalyses the reaction uridine in 5S rRNA = pseudouridine in 5S rRNA. The enzyme catalyses a uridine in tRNA = a pseudouridine in tRNA. It carries out the reaction a uridine in mRNA = a pseudouridine in mRNA. Its function is as follows. Catalyzes uridine to pseudouridine isomerization (pseudouridylation) of different mitochondrial RNA substrates. Acts on position 1397 in 16S mitochondrial ribosomal RNA (16S mt-rRNA). This modification is required for the assembly of 16S mt-rRNA into a functional mitochondrial ribosome. As a component of a functional protein-RNA module, consisting of RCC1L, NGRN, RPUSD3, RPUSD4, TRUB2, FASTKD2 and 16S mt-rRNA, controls 16S mt-rRNA abundance and is required for intra-mitochondrial translation. Acts on position 39 in mitochondrial tRNA(Phe). Also catalyzes pseudouridylation of mRNAs in nucleus: acts as a regulator of pre-mRNA splicing by mediating pseudouridylation of pre-mRNAs at locations associated with alternatively spliced regions. Pseudouridylation of pre-mRNAs near splice sites directly regulates mRNA splicing and mRNA 3'-end processing. In Homo sapiens (Human), this protein is Pseudouridylate synthase RPUSD4, mitochondrial.